Consider the following 206-residue polypeptide: Thymidylate kinase (206 aa).

Residue 14 to 21 (GGEGIGKS) participates in ATP binding.

The protein belongs to the thymidylate kinase family.

The catalysed reaction is dTMP + ATP = dTDP + ADP. Functionally, phosphorylation of dTMP to form dTDP in both de novo and salvage pathways of dTTP synthesis. The polypeptide is Thymidylate kinase (Rickettsia bellii (strain RML369-C)).